Here is a 263-residue protein sequence, read N- to C-terminus: Ribosomal RNA small subunit methyltransferase A (263 aa).

Residues H13, L15, G40, E61, D86, and N105 each contribute to the S-adenosyl-L-methionine site.

This sequence belongs to the class I-like SAM-binding methyltransferase superfamily. rRNA adenine N(6)-methyltransferase family. RsmA subfamily.

The protein resides in the cytoplasm. It carries out the reaction adenosine(1518)/adenosine(1519) in 16S rRNA + 4 S-adenosyl-L-methionine = N(6)-dimethyladenosine(1518)/N(6)-dimethyladenosine(1519) in 16S rRNA + 4 S-adenosyl-L-homocysteine + 4 H(+). Specifically dimethylates two adjacent adenosines (A1518 and A1519) in the loop of a conserved hairpin near the 3'-end of 16S rRNA in the 30S particle. May play a critical role in biogenesis of 30S subunits. The polypeptide is Ribosomal RNA small subunit methyltransferase A (Dichelobacter nodosus (strain VCS1703A)).